The following is a 261-amino-acid chain: Carnitinyl-CoA dehydratase (261 aa).

E111 (nucleophile) is an active-site residue. E131 (proton acceptor) is an active-site residue.

It belongs to the enoyl-CoA hydratase/isomerase family.

The catalysed reaction is (R)-carnitinyl-CoA = crotonobetainyl-CoA + H2O. Its pathway is amine and polyamine metabolism; carnitine metabolism. Functionally, catalyzes the reversible dehydration of L-carnitinyl-CoA to crotonobetainyl-CoA. This Salmonella typhi protein is Carnitinyl-CoA dehydratase.